The primary structure comprises 195 residues: Penicillin-binding protein activator LpoB (195 aa).

Residues 1–16 (MKKRALIVLAALVLAS) form the signal peptide. C17 is lipidated: N-palmitoyl cysteine. Residue C17 is the site of S-diacylglycerol cysteine attachment. The segment at 19–51 (SRKPASPPAPIEPVPPPVTVSVQPPPPATSEPV) is disordered. Pro residues predominate over residues 23-51 (ASPPAPIEPVPPPVTVSVQPPPPATSEPV).

It belongs to the LpoB family. As to quaternary structure, interacts with PBP1b.

It localises to the cell outer membrane. Functionally, regulator of peptidoglycan synthesis that is essential for the function of penicillin-binding protein 1B (PBP1b). This is Penicillin-binding protein activator LpoB from Sodalis glossinidius (strain morsitans).